We begin with the raw amino-acid sequence, 881 residues long: DNA mismatch repair protein MutS (881 aa).

605–612 provides a ligand contact to ATP; it reads GPNMSGKS.

This sequence belongs to the DNA mismatch repair MutS family.

This protein is involved in the repair of mismatches in DNA. It is possible that it carries out the mismatch recognition step. This protein has a weak ATPase activity. The sequence is that of DNA mismatch repair protein MutS from Limosilactobacillus reuteri subsp. reuteri (strain JCM 1112) (Lactobacillus reuteri).